The primary structure comprises 260 residues: UPF0246 protein Bxeno_A1262 (260 aa).

This sequence belongs to the UPF0246 family.

This Paraburkholderia xenovorans (strain LB400) protein is UPF0246 protein Bxeno_A1262.